A 286-amino-acid chain; its full sequence is 2-oxoglutarate synthase subunit KorB (286 aa).

As to quaternary structure, heterotetramer of the KorA, KorB, KorC and KorD subunits.

It carries out the reaction 2 oxidized [2Fe-2S]-[ferredoxin] + 2-oxoglutarate + CoA = succinyl-CoA + 2 reduced [2Fe-2S]-[ferredoxin] + CO2 + H(+). This chain is 2-oxoglutarate synthase subunit KorB (korB), found in Methanothermobacter thermautotrophicus (strain ATCC 29096 / DSM 1053 / JCM 10044 / NBRC 100330 / Delta H) (Methanobacterium thermoautotrophicum).